A 529-amino-acid polypeptide reads, in one-letter code: GTPase Obg (529 aa).

Positions 2 to 159 constitute an Obg domain; sequence ASFVDRVVLH…SDIVLELKSI (158 aa). Residues 160-343 form the OBG-type G domain; sequence ADIALVGFPS…LGFAMAEIVK (184 aa). GTP-binding positions include 166–173, 191–195, 212–215, 295–298, and 324–326; these read GFPSAGKS, FTTLI, DVPG, NKVD, and SAT. Positions 173 and 193 each coordinate Mg(2+). The 85-residue stretch at 363-447 folds into the OCT domain; that stretch reads PRAVNEAGFK…DDGVVFDWEP (85 aa). Positions 466–502 are enriched in basic and acidic residues; it reads FADIGDRPTRGQKRDEQQERRDAKAAARAELEAERKA. Residues 466 to 529 are disordered; that stretch reads FADIGDRPTR…ESGLTTENEE (64 aa).

Belongs to the TRAFAC class OBG-HflX-like GTPase superfamily. OBG GTPase family. Monomer. It depends on Mg(2+) as a cofactor.

It localises to the cytoplasm. In terms of biological role, an essential GTPase which binds GTP, GDP and possibly (p)ppGpp with moderate affinity, with high nucleotide exchange rates and a fairly low GTP hydrolysis rate. Plays a role in control of the cell cycle, stress response, ribosome biogenesis and in those bacteria that undergo differentiation, in morphogenesis control. This is GTPase Obg from Arthrobacter sp. (strain FB24).